A 471-amino-acid chain; its full sequence is Glutamate--tRNA ligase (471 aa).

The 'HIGH' region signature appears at 9 to 19; the sequence is PSPTGYLHVGG. The Zn(2+) site is built by Cys98, Cys100, Cys125, and His127. Positions 237 to 241 match the 'KMSKS' region motif; it reads KLSKR. Position 240 (Lys240) interacts with ATP.

It belongs to the class-I aminoacyl-tRNA synthetase family. Glutamate--tRNA ligase type 1 subfamily. As to quaternary structure, monomer. Zn(2+) serves as cofactor.

It localises to the cytoplasm. The catalysed reaction is tRNA(Glu) + L-glutamate + ATP = L-glutamyl-tRNA(Glu) + AMP + diphosphate. Functionally, catalyzes the attachment of glutamate to tRNA(Glu) in a two-step reaction: glutamate is first activated by ATP to form Glu-AMP and then transferred to the acceptor end of tRNA(Glu). The sequence is that of Glutamate--tRNA ligase from Escherichia coli (strain ATCC 8739 / DSM 1576 / NBRC 3972 / NCIMB 8545 / WDCM 00012 / Crooks).